Here is a 276-residue protein sequence, read N- to C-terminus: Large ribosomal subunit protein uL2 (276 aa).

Disordered stretches follow at residues 38–59 (FQKS…GGHK) and 225–276 (VMNP…RHKR). A compositionally biased stretch (polar residues) spans 39–49 (QKSGRNNNGHI). The span at 50-59 (TTRHKGGGHK) shows a compositional bias: basic residues.

The protein belongs to the universal ribosomal protein uL2 family. Part of the 50S ribosomal subunit. Forms a bridge to the 30S subunit in the 70S ribosome.

One of the primary rRNA binding proteins. Required for association of the 30S and 50S subunits to form the 70S ribosome, for tRNA binding and peptide bond formation. It has been suggested to have peptidyltransferase activity; this is somewhat controversial. Makes several contacts with the 16S rRNA in the 70S ribosome. This Cupriavidus necator (strain ATCC 17699 / DSM 428 / KCTC 22496 / NCIMB 10442 / H16 / Stanier 337) (Ralstonia eutropha) protein is Large ribosomal subunit protein uL2.